A 382-amino-acid polypeptide reads, in one-letter code: Dual-specificity RNA methyltransferase RlmN (382 aa).

The active-site Proton acceptor is the glutamate 96. A Radical SAM core domain is found at glutamine 102–aspartate 342. Cysteine 109 and cysteine 345 are oxidised to a cystine. Residues cysteine 116, cysteine 120, and cysteine 123 each coordinate [4Fe-4S] cluster. Residues glycine 170–glutamate 171, serine 202, serine 224–histidine 226, and asparagine 302 contribute to the S-adenosyl-L-methionine site. Cysteine 345 (S-methylcysteine intermediate) is an active-site residue.

It belongs to the radical SAM superfamily. RlmN family. [4Fe-4S] cluster serves as cofactor.

It is found in the cytoplasm. The enzyme catalyses adenosine(2503) in 23S rRNA + 2 reduced [2Fe-2S]-[ferredoxin] + 2 S-adenosyl-L-methionine = 2-methyladenosine(2503) in 23S rRNA + 5'-deoxyadenosine + L-methionine + 2 oxidized [2Fe-2S]-[ferredoxin] + S-adenosyl-L-homocysteine. The catalysed reaction is adenosine(37) in tRNA + 2 reduced [2Fe-2S]-[ferredoxin] + 2 S-adenosyl-L-methionine = 2-methyladenosine(37) in tRNA + 5'-deoxyadenosine + L-methionine + 2 oxidized [2Fe-2S]-[ferredoxin] + S-adenosyl-L-homocysteine. Its function is as follows. Specifically methylates position 2 of adenine 2503 in 23S rRNA and position 2 of adenine 37 in tRNAs. m2A2503 modification seems to play a crucial role in the proofreading step occurring at the peptidyl transferase center and thus would serve to optimize ribosomal fidelity. The chain is Dual-specificity RNA methyltransferase RlmN from Stutzerimonas stutzeri (strain A1501) (Pseudomonas stutzeri).